The primary structure comprises 577 residues: MVICCAAVNCSNRQGKGEKRAVSFHRFPLKDSKRLIQWLKAVQRDNWTPTKYSFLCSEHFTKDSFSKRLEDQHRLLKPTAVPSIFHLTEKKRGAGGHGRTRRKDASKATGGVRGHSSAATSRGAAGWSPSSSGNPMAKPESRRLKQAALQGEATPRAAQEAASQEQAQQALERTPGDGLATMVAGSQGKAEASATDAGDESATSSIEGGVTDKSGISMDDFTPPGSGACKFIGSLHSYSFSSKHTRERPSVPREPIDRKRLKKDVEPSCSGSSLGPDKGLAQSPPSSSLTATPQKPSQSPSAPPADVTPKPATEAVQSEHSDASPMSINEVILSASGACKLIDSLHSYCFSSRQNKSQVCCLREQVEKKNGELKSLRQRVSRSDSQVRKLQEKLDELRRVSVPYPSSLLSPSREPPKMNPVVEPLSWMLGTWLSDPPGAGTYPTLQPFQYLEEVHISHVGQPMLNFSFNSFHPDTRKPMHRECGFIRLKPDTNKVAFVSAQNTGVVEVEEGEVNGQELCIASHSIARISFAKEPHVEQITRKFRLNSEGKLEQTVSMATTTQPMTQHLHVTYKKVTP.

The THAP-type zinc finger occupies 1 to 85 (MVICCAAVNC…LKPTAVPSIF (85 aa)). The interval 84–221 (IFHLTEKKRG…DKSGISMDDF (138 aa)) is disordered. The segment covering 157 to 170 (AAQEAASQEQAQQA) has biased composition (low complexity). At Ser163 the chain carries Phosphoserine. An HCFC1-binding motif (HBM) motif is present at residues 235–238 (LHSY). Position 239 is a phosphoserine (Ser239). A disordered region spans residues 240-324 (FSSKHTRERP…AVQSEHSDAS (85 aa)). Residues 247–266 (ERPSVPREPIDRKRLKKDVE) show a composition bias toward basic and acidic residues. Low complexity predominate over residues 290–300 (TATPQKPSQSP). Positions 415-577 (PPKMNPVVEP…LHVTYKKVTP (163 aa)) are nitrobindin. Heme b is bound by residues Thr444 and His567.

In the C-terminal section; belongs to the nitrobindin family. Homodimer. It depends on heme b as a cofactor.

Its subcellular location is the cytoplasm. The protein resides in the nucleus. The enzyme catalyses peroxynitrite = nitrate. It participates in nitrogen metabolism. In terms of biological role, heme-binding protein able to scavenge peroxynitrite and to protect free L-tyrosine against peroxynitrite-mediated nitration, by acting as a peroxynitrite isomerase that converts peroxynitrite to nitrate. Therefore, this protein likely plays a role in peroxynitrite sensing and in the detoxification of reactive nitrogen and oxygen species (RNS and ROS, respectively). Is able to bind nitric oxide (NO) in vitro, but may act as a sensor of peroxynitrite levels in vivo, possibly modulating the transcriptional activity residing in the N-terminal region. This chain is Peroxynitrite isomerase THAP4, found in Homo sapiens (Human).